We begin with the raw amino-acid sequence, 281 residues long: Large ribosomal subunit protein uL2 (281 aa).

The disordered stretch occupies residues 215-281 (LGRRPHTRGV…RRNNRKDSKK (67 aa)). Residues 258–269 (KTRDNKSTDKFI) are compositionally biased toward basic and acidic residues. Residues 270–281 (VRRRNNRKDSKK) are compositionally biased toward basic residues.

This sequence belongs to the universal ribosomal protein uL2 family. In terms of assembly, part of the 50S ribosomal subunit. Forms a bridge to the 30S subunit in the 70S ribosome.

Functionally, one of the primary rRNA binding proteins. Required for association of the 30S and 50S subunits to form the 70S ribosome, for tRNA binding and peptide bond formation. It has been suggested to have peptidyltransferase activity; this is somewhat controversial. Makes several contacts with the 16S rRNA in the 70S ribosome. The polypeptide is Large ribosomal subunit protein uL2 (Pelagibacter ubique (strain HTCC1062)).